The following is a 695-amino-acid chain: Adhesion G protein-coupled receptor F4 (695 aa).

The N-terminal stretch at 1-21 (MKMKSQATMICCLVFFLSTEC) is a signal peptide. The Extracellular segment spans residues 22 to 406 (SHYRSKIHLK…TDKVLDYITC (385 aa)). N-linked (GlcNAc...) asparagine glycans are attached at residues asparagine 61, asparagine 169, asparagine 177, asparagine 209, asparagine 229, asparagine 250, asparagine 257, asparagine 263, asparagine 264, asparagine 286, asparagine 309, and asparagine 340. The GAIN-B domain occupies 249–397 (HNTSEKSLNF…SILMSSKSMT (149 aa)). Cystine bridges form between cysteine 349-cysteine 376 and cysteine 364-cysteine 378. The interval 349 to 397 (CVGWHSKKRRWDEKACQMMLDIRNEVKCRCNYTSVVMSFSILMSSKSMT) is GPS. N-linked (GlcNAc...) asparagine glycosylation occurs at asparagine 379. A helical transmembrane segment spans residues 407-427 (IGLSVSILSLVLCLIIEATVW). Residues 428–440 (SRVVVTEISYMRH) are Cytoplasmic-facing. Residues 441-461 (VCIVNIAVSLLTANVWFIIGS) traverse the membrane as a helical segment. The Extracellular portion of the chain corresponds to 462–485 (HFNIKAQDYNMCVAVTFFSHFFYL). A helical membrane pass occupies residues 486–506 (SLFFWMLFKALLIIYGILVIF). Over 507 to 515 (RRMMKSRMM) the chain is Cytoplasmic. Residues 516-536 (VIGFAIGYGCPLIIAVTTVAI) form a helical membrane-spanning segment. Residues 537–561 (TEPEKGYMRPEACWLNWDNTKALLA) lie on the Extracellular side of the membrane. Residues 562 to 582 (FAIPAFVIVAVNLIVVLVVAV) traverse the membrane as a helical segment. Residues 583-606 (NTQRPSIGSSKSQDVVIIMRISKN) are Cytoplasmic-facing. Residues 607–627 (VAILTPLLGLTWGFGIATLIE) form a helical membrane-spanning segment. Residues 628–634 (GTSLTFH) are Extracellular-facing. The chain crosses the membrane as a helical span at residues 635 to 655 (IIFALLNAFQGFFILLFGTIM). Over 656-695 (DHKIRDALRMRMSSLKGKSRAAENASLGPTNGSKLMNRQG) the chain is Cytoplasmic. The segment at 674–695 (SRAAENASLGPTNGSKLMNRQG) is disordered. Residues 682-695 (LGPTNGSKLMNRQG) are compositionally biased toward polar residues.

It belongs to the G-protein coupled receptor 2 family. Adhesion G-protein coupled receptor (ADGR) subfamily.

It localises to the membrane. Orphan receptor. This chain is Adhesion G protein-coupled receptor F4 (ADGRF4), found in Homo sapiens (Human).